A 432-amino-acid chain; its full sequence is D-amino acid dehydrogenase (432 aa).

3-17 (VVVLGSGVVGVASAW) provides a ligand contact to FAD.

It belongs to the DadA oxidoreductase family. The cofactor is FAD.

It carries out the reaction a D-alpha-amino acid + A + H2O = a 2-oxocarboxylate + AH2 + NH4(+). The protein operates within amino-acid degradation; D-alanine degradation; NH(3) and pyruvate from D-alanine: step 1/1. Oxidative deamination of D-amino acids. This is D-amino acid dehydrogenase from Cronobacter sakazakii (strain ATCC BAA-894) (Enterobacter sakazakii).